Reading from the N-terminus, the 720-residue chain is WSC domain-containing protein ARB_07870 (720 aa).

Residues 1 to 24 (MLINLSAVWAAFALSGVLAPPTWP) form the signal peptide. 13 N-linked (GlcNAc...) asparagine glycosylation sites follow: N4, N108, N181, N264, N296, N318, N474, N549, N581, N629, N640, N663, and N701. 2 consecutive WSC domains span residues 524–615 (DYTF…YKDD) and 627–718 (GYNY…YTKL).

This sequence belongs to the WSCD family.

Its subcellular location is the secreted. The polypeptide is WSC domain-containing protein ARB_07870 (Arthroderma benhamiae (strain ATCC MYA-4681 / CBS 112371) (Trichophyton mentagrophytes)).